The following is a 293-amino-acid chain: Ribosomal protein L11 methyltransferase (293 aa).

4 residues coordinate S-adenosyl-L-methionine: T145, G166, D188, and N230.

It belongs to the methyltransferase superfamily. PrmA family.

It is found in the cytoplasm. The enzyme catalyses L-lysyl-[protein] + 3 S-adenosyl-L-methionine = N(6),N(6),N(6)-trimethyl-L-lysyl-[protein] + 3 S-adenosyl-L-homocysteine + 3 H(+). In terms of biological role, methylates ribosomal protein L11. The polypeptide is Ribosomal protein L11 methyltransferase (Shewanella baltica (strain OS155 / ATCC BAA-1091)).